Consider the following 239-residue polypeptide: Protein TIPIN homolog (239 aa).

Acidic residues-rich tracts occupy residues 1–14 (MDEM…DELD) and 156–166 (DGADDDEDDLF). Disordered stretches follow at residues 1–38 (MDEM…RRII) and 135–239 (ESTD…NNDW). Basic and acidic residues-rich tracts occupy residues 169 to 193 (LPEK…EKKN) and 206 to 223 (YRMM…AREA). The span at 224–239 (EAEDELMEDFDLNNDW) shows a compositional bias: acidic residues.

This sequence belongs to the CSM3 family.

It is found in the cytoplasm. It localises to the nucleus. Functionally, required for normal progression of S-phase. Important for cell survival after DNA damage or replication stress. This chain is Protein TIPIN homolog, found in Caenorhabditis briggsae.